We begin with the raw amino-acid sequence, 254 residues long: MFVDLNSDLGESFGSWKMGNDDQILPVVTSANIACGFHAGDPLGILKTVRKAVELGVTIGAHVSYPDLVGFGRRNMDLSRDELIADVLYQISALDGLAKVAGSKVQYVKPHGALYNTIAHDQAQAAAVIDAIKMYNPELVLVALAGSNLVEQARVAGLKVVSEAFADRAYNSDGSLVSRRLEGAVLHDSAFVASRVVSMLKNGGVESIDGVFTPIQADTICLHGDTDGALEMSAAIKAELVKNNIEIRPFVNKA.

It belongs to the LamB/PxpA family. Forms a complex composed of PxpA, PxpB and PxpC.

It carries out the reaction 5-oxo-L-proline + ATP + 2 H2O = L-glutamate + ADP + phosphate + H(+). Its function is as follows. Catalyzes the cleavage of 5-oxoproline to form L-glutamate coupled to the hydrolysis of ATP to ADP and inorganic phosphate. This Acinetobacter baumannii (strain ATCC 17978 / DSM 105126 / CIP 53.77 / LMG 1025 / NCDC KC755 / 5377) protein is 5-oxoprolinase subunit A.